The primary structure comprises 356 residues: DNA-directed RNA polymerase subunit alpha (356 aa).

Residues Met1–Leu259 form an alpha N-terminal domain (alpha-NTD) region. Residues Phe277–Asp356 form an alpha C-terminal domain (alpha-CTD) region.

The protein belongs to the RNA polymerase alpha chain family. In terms of assembly, in plastids the minimal PEP RNA polymerase catalytic core is composed of four subunits: alpha, beta, beta', and beta''. When a (nuclear-encoded) sigma factor is associated with the core the holoenzyme is formed, which can initiate transcription.

The protein localises to the plastid. It localises to the chloroplast. It carries out the reaction RNA(n) + a ribonucleoside 5'-triphosphate = RNA(n+1) + diphosphate. DNA-dependent RNA polymerase catalyzes the transcription of DNA into RNA using the four ribonucleoside triphosphates as substrates. The protein is DNA-directed RNA polymerase subunit alpha of Ostreococcus tauri.